A 306-amino-acid polypeptide reads, in one-letter code: Arylesterase (306 aa).

Positions 82-84 (HGG) match the Involved in the stabilization of the negatively charged intermediate by the formation of the oxyanion hole motif. Catalysis depends on residues serine 156, aspartate 251, and histidine 281.

In terms of assembly, monomer.

It catalyses the reaction a phenyl acetate + H2O = a phenol + acetate + H(+). The catalysed reaction is An aryl dialkyl phosphate + H2O = dialkyl phosphate + an aryl alcohol.. With respect to regulation, completely inhibited by chemical modifiers that are specific to Cys (HgCl(2) and p-chloromercuribenzoic acid), His (diethyl pyrocarbonate) and Ser (diisopropyl fluorophosphate and phenylmethanesulfonyl fluoride). No significant effect with chemical modifiers specific to Lys (pyridoxal 5'-phosphate) and Arg (phenylglyoxal). Not inhibited by inhibitors of A-esterases (paraoxon) or C-esterases (physostigmine/eserine). Activity is also not effected by incubation with 5 mM divalent cations for 30 minutes at 30 degrees Celsius or with 10 mM EDTA for 60 minutes at 75 degrees Celsius. Its function is as follows. Has a broad substrate specificity. Hydrolyzes various p-nitrophenyl phosphates, aromatic esters and p-nitrophenyl fatty acids in vitro. Most active against paraoxon, phenyl acetate and p-nitrophenyl caproate (C6), respectively. Also has tributyrinase activity, but shows no hydrolytic activity toward other triacylglycerols including tricaprylin, trimyristin, tripalmitin or triolein in vitro. The protein is Arylesterase of Saccharolobus solfataricus (Sulfolobus solfataricus).